The following is a 148-amino-acid chain: MTKQERQLKIKELISGQTVSSQYELLSELKSVGIEITQATLSRDCAELGIVRMYSGDSYKLSIPASGEKNVIKNLIGVEILSIQANEIFVIIKTLPGRASGVASFIDSFENPMIIGTLAGDDTVMVIPKTIKETKKVHQFIRNSISDN.

It belongs to the ArgR family.

The protein resides in the cytoplasm. The protein operates within amino-acid biosynthesis; L-arginine biosynthesis [regulation]. In terms of biological role, regulates arginine biosynthesis genes. The sequence is that of Arginine repressor from Chloroherpeton thalassium (strain ATCC 35110 / GB-78).